The following is a 378-amino-acid chain: Inner membrane protein YibH (378 aa).

Topologically, residues 1-3 (MDL) are periplasmic. A helical membrane pass occupies residues 4 to 24 (LIVLTYVALAWAVFKIFRIPV). The Cytoplasmic portion of the chain corresponds to 25–26 (NQ). A helical transmembrane segment spans residues 27–47 (WTLATAALGGVFLVSGLILLM). Topologically, residues 48-54 (NYNHPYT) are periplasmic. A helical transmembrane segment spans residues 55–75 (FTAQKAVIAIPITPQVTGIVT). At 76-232 (EVTDKNNQLI…RAPSNGYVTQ (157 aa)) the chain is on the cytoplasmic side. The chain crosses the membrane as a helical span at residues 233-253 (VLIRPGTYAAALPLRPVMVFI). The Periplasmic segment spans residues 254 to 280 (PEQKRQIVAQFRQNSLLRLKPGDDAEV). Residues 281–301 (VFNALPGQVFHGKLTSILPVV) traverse the membrane as a helical segment. Residues 302–309 (PGGSYQAQ) lie on the Cytoplasmic side of the membrane. Residues 310–330 (GVLQSLTVVPGTDGVLGTIEL) form a helical membrane-spanning segment. Over 331-378 (DPNDDIDALPDGIYAQVAVYSDHFSHVSVMRKVLLRMTSWMHYLYLDH) the chain is Periplasmic.

It belongs to the membrane fusion protein (MFP) (TC 8.A.1) family.

It is found in the cell inner membrane. The protein is Inner membrane protein YibH (yibH) of Escherichia coli O157:H7.